The primary structure comprises 36 residues: Glucagon-1 (36 aa).

It belongs to the glucagon family.

The protein localises to the secreted. Promotes hydrolysis of glycogen and lipids, and raises the blood sugar level. This chain is Glucagon-1 (gcg1), found in Oreochromis niloticus (Nile tilapia).